Here is a 192-residue protein sequence, read N- to C-terminus: Adenylate kinase (192 aa).

10-15 (GAGKGT) contributes to the ATP binding site. The tract at residues 30–59 (STGDMLRTAVAQATEVGKRAKAVMDAGQLV) is NMP. AMP contacts are provided by residues Thr31, Arg36, 57 to 59 (QLV), 85 to 88 (GYPR), and Gln92. The tract at residues 126 to 142 (NRVTETVAAGGTVRSDD) is LID. Arg127 provides a ligand contact to ATP. AMP contacts are provided by Arg139 and Arg150. An ATP-binding site is contributed by Ala178.

The protein belongs to the adenylate kinase family. As to quaternary structure, monomer.

Its subcellular location is the cytoplasm. It carries out the reaction AMP + ATP = 2 ADP. Its pathway is purine metabolism; AMP biosynthesis via salvage pathway; AMP from ADP: step 1/1. Its function is as follows. Catalyzes the reversible transfer of the terminal phosphate group between ATP and AMP. Plays an important role in cellular energy homeostasis and in adenine nucleotide metabolism. This Rhizobium meliloti (strain 1021) (Ensifer meliloti) protein is Adenylate kinase.